We begin with the raw amino-acid sequence, 288 residues long: Bifunctional protein FolD (288 aa).

NADP(+)-binding positions include 166-168 and Ile-232; that span reads GAS.

The protein belongs to the tetrahydrofolate dehydrogenase/cyclohydrolase family. Homodimer.

It catalyses the reaction (6R)-5,10-methylene-5,6,7,8-tetrahydrofolate + NADP(+) = (6R)-5,10-methenyltetrahydrofolate + NADPH. The enzyme catalyses (6R)-5,10-methenyltetrahydrofolate + H2O = (6R)-10-formyltetrahydrofolate + H(+). The protein operates within one-carbon metabolism; tetrahydrofolate interconversion. Catalyzes the oxidation of 5,10-methylenetetrahydrofolate to 5,10-methenyltetrahydrofolate and then the hydrolysis of 5,10-methenyltetrahydrofolate to 10-formyltetrahydrofolate. The sequence is that of Bifunctional protein FolD from Klebsiella pneumoniae (strain 342).